The chain runs to 944 residues: Translation factor GUF1 homolog, mitochondrial (944 aa).

The 179-residue stretch at 201–379 (KNVRNFCILA…IITDIPYPPI (179 aa)) folds into the tr-type G domain. Residues 210–217 (AHIDSGKS), 271–275 (DTPGH), and 325–328 (NKID) contribute to the GTP site.

This sequence belongs to the TRAFAC class translation factor GTPase superfamily. Classic translation factor GTPase family. LepA subfamily.

The protein resides in the mitochondrion inner membrane. The enzyme catalyses GTP + H2O = GDP + phosphate + H(+). In terms of biological role, promotes mitochondrial protein synthesis. May act as a fidelity factor of the translation reaction, by catalyzing a one-codon backward translocation of tRNAs on improperly translocated ribosomes. Binds to mitochondrial ribosomes in a GTP-dependent manner. This is Translation factor GUF1 homolog, mitochondrial from Plasmodium yoelii yoelii.